The sequence spans 396 residues: Protein nipi-4 (396 aa).

Residues 1–20 (MELDHTPPPSVLNDNCSASY) are Extracellular-facing. Asparagine 15 carries an N-linked (GlcNAc...) asparagine glycan. Residues 21 to 41 (MTPYATVIAMSGLYLLAIFYF) form a helical membrane-spanning segment. Residues 42–396 (CKKSKKMCQP…EHHCQSVIHY (355 aa)) are Cytoplasmic-facing. The Protein kinase domain maps to 81-368 (EVDDFQIGQT…SRLSELHHIV (288 aa)). ATP contacts are provided by residues 87–95 (IGQTADGFI) and lysine 111.

Belongs to the protein kinase superfamily. Tyr protein kinase family. Expressed in the epidermis of larvae and adults and in vulval and rectal cells.

Its subcellular location is the membrane. Pseudokinase which plays a role in resistance to fungal infection by promoting expression of antimicrobial peptides (nlp-29, nlp-31, nlp-34, cnc-1, cnc-2 and cnc-4) in the epidermis. In addition, up-regulates nlp-29 expression upon physical wounding and in response to phorbol ester PMA treatment. In Caenorhabditis elegans, this protein is Protein nipi-4.